The primary structure comprises 513 residues: Steroid (22S)-hydroxylase (513 aa).

Residues 8 to 28 (TLLPLLLLPSLLSLLLFLILL) traverse the membrane as a helical segment. The interval 252–277 (DIKEEDQEEEEVKTEDEAEMSKSDHV) is disordered. Residues 254-269 (KEEDQEEEEVKTEDEA) show a composition bias toward acidic residues. Cys462 serves as a coordination point for heme.

This sequence belongs to the cytochrome P450 family. Requires heme as cofactor. In terms of tissue distribution, expressed in stems, leaves, shoots, and roots, with a higher expression in siliques and apical shoots.

Its subcellular location is the membrane. It carries out the reaction a C27-steroid + reduced [NADPH--hemoprotein reductase] + O2 = a (22S)-22-hydroxy C27-steroid + oxidized [NADPH--hemoprotein reductase] + H2O + H(+). The catalysed reaction is a C28-steroid + reduced [NADPH--hemoprotein reductase] + O2 = a (22S)-22-hydroxy C28-steroid + oxidized [NADPH--hemoprotein reductase] + H2O + H(+). The enzyme catalyses a C29-steroid + reduced [NADPH--hemoprotein reductase] + O2 = a (22S)-22-hydroxy C29-steroid + oxidized [NADPH--hemoprotein reductase] + H2O + H(+). It catalyses the reaction cholesterol + reduced [NADPH--hemoprotein reductase] + O2 = (22S)-22-hydroxycholesterol + oxidized [NADPH--hemoprotein reductase] + H2O + H(+). It carries out the reaction cholestanol + reduced [NADPH--hemoprotein reductase] + O2 = (22S)-22-hydroxycholestanol + oxidized [NADPH--hemoprotein reductase] + H2O + H(+). The catalysed reaction is campestanol + reduced [NADPH--hemoprotein reductase] + O2 = 6-deoxycathasterone + oxidized [NADPH--hemoprotein reductase] + H2O + H(+). The enzyme catalyses campesterol + reduced [NADPH--hemoprotein reductase] + O2 = (22S)-22-hydroxycampesterol + oxidized [NADPH--hemoprotein reductase] + H2O + H(+). It catalyses the reaction 6-oxocampestanol + reduced [NADPH--hemoprotein reductase] + O2 = cathasterone + oxidized [NADPH--hemoprotein reductase] + H2O + H(+). It carries out the reaction sitosterol + reduced [NADPH--hemoprotein reductase] + O2 = (22S)-22-hydroxysitosterol + oxidized [NADPH--hemoprotein reductase] + H2O + H(+). It participates in plant hormone biosynthesis; brassinosteroid biosynthesis. Its function is as follows. Catalyzes the C22-alpha-hydroxylation step in brassinosteroids biosynthesis. Converts campesterol (CR) to (22S)-22-hydroxycampesterol (22-OHCR, 22-hydroxyCR), campestanol (CN) to 6-deoxycathasterone (6-deoxoCT), and 6-oxocampestanol (6-oxoCN) to cathasterone (CT). Can also use cholesterol and cholestanol as substrates. In Arabidopsis thaliana (Mouse-ear cress), this protein is Steroid (22S)-hydroxylase.